The sequence spans 394 residues: NAC domain-containing protein 26 (394 aa).

The 150-residue stretch at 7 to 156 folds into the NAC domain; the sequence is VPPGFRFHPT…GWVVCRVFKK (150 aa). A DNA-binding region spans residues 107–162; sequence IGMRKTLVFYKGRAPNGQKSDWIMHEYRLETSENGTPQEEGWVVCRVFKKKLAATV.

It belongs to the plant vascular related NAC-domain protein family. Interacts with NAC083/VNI2. As to expression, detected in root vessels of protoxylems, outermost metaxylems, inner metaxylems, shoots and hypocotyls. Expressed in roots, hypocotyls, cotyledons and leaves. Expressed in developing xylems. Specifically expressed in vessels in the secondary xylem of the root-hypocotyl region, and in vessels but not in interfascicular fibers in stems.

The protein localises to the nucleus. Functionally, transcription activator that binds to the secondary wall NAC binding element (SNBE), 5'-(T/A)NN(C/T)(T/C/G)TNNNNNNNA(A/C)GN(A/C/T)(A/T)-3', in the promoter of target genes. Involved in xylem formation by promoting the expression of secondary wall-associated transcription factors and of genes involved in secondary wall biosynthesis and programmed cell death, genes driven by the secondary wall NAC binding element (SNBE). Triggers thickening of secondary walls. The sequence is that of NAC domain-containing protein 26 from Arabidopsis thaliana (Mouse-ear cress).